The sequence spans 691 residues: Probable serine/threonine-protein kinase pXi (691 aa).

One can recognise a Protein kinase domain in the interval Tyr18–Ile263. Residues Ile24 to Val32 and Lys47 each bind ATP. Catalysis depends on Asp137, which acts as the Proton acceptor. 4 disordered regions span residues Thr314–Asn350, Glu420–Ser447, Gln510–Thr536, and Gly600–Lys620. The segment covering Asn322–Asn336 has biased composition (low complexity). Residues Ile338–Asn350 show a composition bias toward basic and acidic residues. Composition is skewed to low complexity over residues Ser423–Ser433, Asn512–Thr536, and Gly600–Ser615. Positions Pro642–Lys691 form a coiled coil.

Belongs to the protein kinase superfamily. CAMK Ser/Thr protein kinase family.

It catalyses the reaction L-seryl-[protein] + ATP = O-phospho-L-seryl-[protein] + ADP + H(+). It carries out the reaction L-threonyl-[protein] + ATP = O-phospho-L-threonyl-[protein] + ADP + H(+). The sequence is that of Probable serine/threonine-protein kinase pXi (pXi) from Dictyostelium discoideum (Social amoeba).